The primary structure comprises 180 residues: MFEATTILGYRGEFDNKKFALIGGDGQVTLGNCVVKANAIKIRSLYHNQVLSGFAGSTADAFSLFDMFERILESKKGDLFKSVVDFSKEWRKDKYLRRLEAMMIVLNFDHVFILSGTGDVLEAEDNKIAAIGSGGNFALSAARALDHFAHLEPRKLVEESLKIAGDLCIYTNTNIKILEL.

The active site involves T5. Na(+) contacts are provided by G165, C168, and T171.

It belongs to the peptidase T1B family. HslV subfamily. As to quaternary structure, a double ring-shaped homohexamer of HslV is capped on each side by a ring-shaped HslU homohexamer. The assembly of the HslU/HslV complex is dependent on binding of ATP.

It localises to the cytoplasm. The enzyme catalyses ATP-dependent cleavage of peptide bonds with broad specificity.. Its activity is regulated as follows. Allosterically activated by HslU binding. In terms of biological role, protease subunit of a proteasome-like degradation complex believed to be a general protein degrading machinery. The chain is ATP-dependent protease subunit HslV from Helicobacter pylori (strain J99 / ATCC 700824) (Campylobacter pylori J99).